We begin with the raw amino-acid sequence, 144 residues long: D-aminoacyl-tRNA deacylase (144 aa).

The Gly-cisPro motif, important for rejection of L-amino acids signature appears at 136–137; sequence GP.

Belongs to the DTD family. In terms of assembly, homodimer.

It is found in the cytoplasm. The enzyme catalyses glycyl-tRNA(Ala) + H2O = tRNA(Ala) + glycine + H(+). The catalysed reaction is a D-aminoacyl-tRNA + H2O = a tRNA + a D-alpha-amino acid + H(+). Its function is as follows. An aminoacyl-tRNA editing enzyme that deacylates mischarged D-aminoacyl-tRNAs. Also deacylates mischarged glycyl-tRNA(Ala), protecting cells against glycine mischarging by AlaRS. Acts via tRNA-based rather than protein-based catalysis; rejects L-amino acids rather than detecting D-amino acids in the active site. By recycling D-aminoacyl-tRNA to D-amino acids and free tRNA molecules, this enzyme counteracts the toxicity associated with the formation of D-aminoacyl-tRNA entities in vivo and helps enforce protein L-homochirality. The sequence is that of D-aminoacyl-tRNA deacylase from Haemophilus influenzae (strain 86-028NP).